We begin with the raw amino-acid sequence, 371 residues long: Diterpene cyclase DtcycA (371 aa).

Positions 234, 238, and 242 each coordinate Mg(2+).

This sequence belongs to the terpene synthase family. In terms of assembly, homodimer. Mg(2+) serves as cofactor.

The enzyme catalyses (2E,6E,10E)-geranylgeranyl diphosphate = cembrene C + diphosphate. It catalyses the reaction (2E,6E,10E)-geranylgeranyl diphosphate + H2O = (R)-nephthenol + diphosphate. Its function is as follows. Diterpene cyclases that can form multiple diterpene products. In Streptomyces sp, this protein is Diterpene cyclase DtcycA.